The following is a 556-amino-acid chain: Arginine--tRNA ligase (556 aa).

The short motif at 134–144 is the 'HIGH' region element; it reads ANPTGPLHIGH.

Belongs to the class-I aminoacyl-tRNA synthetase family. Monomer.

It is found in the cytoplasm. The enzyme catalyses tRNA(Arg) + L-arginine + ATP = L-arginyl-tRNA(Arg) + AMP + diphosphate. In Micrococcus luteus (strain ATCC 4698 / DSM 20030 / JCM 1464 / CCM 169 / CCUG 5858 / IAM 1056 / NBRC 3333 / NCIMB 9278 / NCTC 2665 / VKM Ac-2230) (Micrococcus lysodeikticus), this protein is Arginine--tRNA ligase.